The sequence spans 170 residues: Cathelicidin antimicrobial peptide (170 aa).

Positions 1–30 (MKTQRDGHSLGRWSLVLLLLGLVMPLAIIA) are cleaved as a signal peptide. Positions 31–131 (QVLSYKEAVL…DISCDKDNKR (101 aa)) are cleaved as a propeptide — cathelin-like domain (CLD). 2 cysteine pairs are disulfide-bonded: C86–C97 and C108–C125. Residues 150 to 162 (FKRIVQRIKDFLR) form an active core region.

This sequence belongs to the cathelicidin family. In terms of assembly, monomer, homodimer or homotrimer (in vitro). Oligomerizes as tetra- or hexamer in solution (in vitro). Post-translationally, the N-terminus is blocked. In terms of processing, proteolytically cleaved by proteinase PRTN3 into antibacterial peptide LL-37. Proteolytically cleaved by cathepsin CTSG and neutrophil elastase ELANE. Resistant to proteolytic degradation in solution, and when bound to both zwitterionic (mimicking mammalian membranes) and negatively charged membranes (mimicking bacterial membranes). Post-translationally, after secretion onto the skin surface, the CAMP gene product is processed by a serine protease-dependent mechanism into multiple novel antimicrobial peptides distinct from and shorter than cathelicidin LL-37, such as peptides KR-20 (residues 151-170), LL-23 (residues 134-156), LL-29 (residues 134-162), KS-30 (residues 141-170), RK-31 (residues 140-170) and FF-33 (residues 138-170). The peptides act synergistically, killing bacteria at lower concentrations when present together, and maintain activity at increased salt condition. Expressed in neutrophilic granulocytes (at protein level). Expressed in bone marrow. As to expression, expressed in granulocytes (at protein level). Expressed by the eccrine apparatus and secreted into sweat on skin (at protein level). In terms of tissue distribution, expressed in bone marrow and testis.

The protein resides in the secreted. It is found in the vesicle. Antimicrobial protein that is an integral component of the innate immune system. Binds to bacterial lipopolysaccharides (LPS). Acts via neutrophil N-formyl peptide receptors to enhance the release of CXCL2. Postsecretory processing generates multiple cathelicidin antimicrobial peptides with various lengths which act as a topical antimicrobial defense in sweat on skin. The unprocessed precursor form, cathelicidin antimicrobial peptide, inhibits the growth of Gram-negative E.coli and E.aerogenes with efficiencies comparable to that of the mature peptide LL-37 (in vitro). In terms of biological role, antimicrobial peptide that is an integral component of the innate immune system. Binds to bacterial lipopolysaccharides (LPS). Causes membrane permeabilization by forming transmembrane pores (in vitro). Causes lysis of E.coli. Exhibits antimicrobial activity against Gram-negative bacteria such as P.aeruginosa, S.typhimurium, E.aerogenes, E.coli and P.syringae, Gram-positive bacteria such as L.monocytogenes, S.epidermidis, S.pyogenes and S.aureus, as well as vancomycin-resistant enterococci (in vitro). Exhibits antimicrobial activity against methicillin-resistant S.aureus, P.mirabilis, and C.albicans in low-salt media, but not in media containing 100 mM NaCl (in vitro). Forms chiral supramolecular assemblies with quinolone signal (PQS) molecules of P.aeruginosa, which may lead to interference of bacterial quorum signaling and perturbance of bacterial biofilm formation. May form supramolecular fiber-like assemblies on bacterial membranes. Induces cytokine and chemokine production as well as TNF/TNFA and CSF2/GMCSF production in normal human keratinocytes. Exhibits hemolytic activity against red blood cells. Functionally, exhibits antimicrobial activity against E.coli and B.megaterium (in vitro). Its function is as follows. Acts synergistically with peptides KS-30 and KR-31, killing bacteria such as S.aureus, E.coli and C.albicans at lower concentrations when present together, and maintains activity at increased salt condition. Does not have the ability to stimulate CXCL8/IL8 release from keratinocytes. Poorly active (MIC &gt; 150 uM) against E.coli strain K12. Is able to induce the pro-inflammatory cytokine TNF/TNFA or the chemokine CCL2/MCP1. In terms of biological role, moderately antibacterial. Functionally, moderately antibacterial. Acts synergistically with peptides KR-20 and KR-31, killing bacteria such as S.aureus, E.coli and C.albicans at lower concentrations when present together, and maintain activity at increased salt condition. Does not have the ability to stimulate CXCL8/IL8 release from keratinocytes. Its function is as follows. Acts synergistically with peptides KS-30 and KR-31, killing bacteria such as S.aureus, E.coli and C.albicans at lower concentrations when present together, and maintain activity at increased salt condition. Does not have the ability to stimulate CXCL8/IL8 release from keratinocytes. Inhibits the growth of E.coli and B.megaterium and exhibits hemolytic activity against human red blood cells. The polypeptide is Cathelicidin antimicrobial peptide (Homo sapiens (Human)).